We begin with the raw amino-acid sequence, 146 residues long: Basic phospholipase A2 (146 aa).

The N-terminal stretch at 1 to 21 (MYPAHLLVLLAVCVSLLGAAS) is a signal peptide. A propeptide spanning residues 22-27 (IPPLPL) is cleaved from the precursor. Cystine bridges form between Cys-38–Cys-98, Cys-54–Cys-145, Cys-56–Cys-72, Cys-71–Cys-126, Cys-78–Cys-119, Cys-87–Cys-112, and Cys-105–Cys-117. 3 residues coordinate Ca(2+): Tyr-55, Gly-57, and Gly-59. The active site involves His-75. Asp-76 serves as a coordination point for Ca(2+). The active site involves Asp-120.

This sequence belongs to the phospholipase A2 family. Group I subfamily. D49 sub-subfamily. It depends on Ca(2+) as a cofactor. Expressed by the venom gland.

It is found in the secreted. It catalyses the reaction a 1,2-diacyl-sn-glycero-3-phosphocholine + H2O = a 1-acyl-sn-glycero-3-phosphocholine + a fatty acid + H(+). In terms of biological role, snake venom phospholipase A2 (PLA2) that inhibits neuromuscular transmission by blocking acetylcholine release from the nerve termini. PLA2 catalyzes the calcium-dependent hydrolysis of the 2-acyl groups in 3-sn-phosphoglycerides. This is Basic phospholipase A2 from Hydrophis hardwickii (Hardwick's spine-bellied seasnake).